Here is a 439-residue protein sequence, read N- to C-terminus: tRNA-2-methylthio-N(6)-dimethylallyladenosine synthase (439 aa).

In terms of domain architecture, MTTase N-terminal spans 2 to 119 (KKLYLKTHGC…LPDLLDSVIQ (118 aa)). [4Fe-4S] cluster is bound by residues cysteine 11, cysteine 48, cysteine 82, cysteine 156, cysteine 160, and cysteine 163. A Radical SAM core domain is found at 142-374 (RAEGPSAFVS…QNRINVKAAE (233 aa)). One can recognise a TRAM domain in the interval 377–439 (QSMVGTQQRI…RPYSLWGEIC (63 aa)).

Belongs to the methylthiotransferase family. MiaB subfamily. As to quaternary structure, monomer. [4Fe-4S] cluster is required as a cofactor.

It is found in the cytoplasm. It catalyses the reaction N(6)-dimethylallyladenosine(37) in tRNA + (sulfur carrier)-SH + AH2 + 2 S-adenosyl-L-methionine = 2-methylsulfanyl-N(6)-dimethylallyladenosine(37) in tRNA + (sulfur carrier)-H + 5'-deoxyadenosine + L-methionine + A + S-adenosyl-L-homocysteine + 2 H(+). In terms of biological role, catalyzes the methylthiolation of N6-(dimethylallyl)adenosine (i(6)A), leading to the formation of 2-methylthio-N6-(dimethylallyl)adenosine (ms(2)i(6)A) at position 37 in tRNAs that read codons beginning with uridine. The chain is tRNA-2-methylthio-N(6)-dimethylallyladenosine synthase from Coxiella burnetii (strain Dugway 5J108-111).